The sequence spans 275 residues: Vitamin B12-binding protein (275 aa).

The signal sequence occupies residues 1-27 (MKWIKSTGSIGLSLLLFLSSFSHSLYA). One can recognise a Fe/B12 periplasmic-binding domain in the interval 31-275 (RVISLSPSTT…LCQQLNDNGS (245 aa)). Tyrosine 58 contributes to the cyanocob(III)alamin binding site. A disulfide bridge links cysteine 191 with cysteine 267.

This sequence belongs to the BtuF family. The complex is composed of two ATP-binding proteins (BtuD), two transmembrane proteins (BtuC) and a solute-binding protein (BtuF).

It localises to the periplasm. Its function is as follows. Part of the ABC transporter complex BtuCDF involved in vitamin B12 import. Binds vitamin B12 and delivers it to the periplasmic surface of BtuC. In Photorhabdus laumondii subsp. laumondii (strain DSM 15139 / CIP 105565 / TT01) (Photorhabdus luminescens subsp. laumondii), this protein is Vitamin B12-binding protein.